The sequence spans 347 residues: Protein-glutamate methylesterase/protein-glutamine glutaminase 3 (347 aa).

The Response regulatory domain maps to 3–120 (QVFIVDDSAV…KNFLEESEIL (118 aa)). A 4-aspartylphosphate modification is found at Asp-54. One can recognise a CheB-type methylesterase domain in the interval 159–347 (IDTTDKLIAI…SKIVGEVQYF (189 aa)). Active-site residues include Ser-171, His-197, and Asp-293.

Belongs to the CheB family. In terms of processing, phosphorylated by CheA. Phosphorylation of the N-terminal regulatory domain activates the methylesterase activity.

The protein resides in the cytoplasm. It carries out the reaction [protein]-L-glutamate 5-O-methyl ester + H2O = L-glutamyl-[protein] + methanol + H(+). The enzyme catalyses L-glutaminyl-[protein] + H2O = L-glutamyl-[protein] + NH4(+). Its function is as follows. Involved in chemotaxis. Part of a chemotaxis signal transduction system that modulates chemotaxis in response to various stimuli. Catalyzes the demethylation of specific methylglutamate residues introduced into the chemoreceptors (methyl-accepting chemotaxis proteins or MCP) by CheR. Also mediates the irreversible deamidation of specific glutamine residues to glutamic acid. This is Protein-glutamate methylesterase/protein-glutamine glutaminase 3 from Leptospira interrogans serogroup Icterohaemorrhagiae serovar copenhageni (strain Fiocruz L1-130).